The sequence spans 211 residues: MRLTAKQVTWLKVCLHLAGLLPFLWLVWAINHGGLGADPVKDIQHFTGLTALKFLLAALLITPLARYAKQPLLIRTRRLLGLWCFAWATLHLTSYALLELGVNNLALLGKELITRPYLTLGIISWVILLALAFTSTQSMQRKLGKHWQQLHNFVYLVAILAPIHYLWSVKIISPQPLIYAGLAVLLLALRYKKLLSLFNRLRKQAHNKLSL.

The next 5 helical transmembrane spans lie at 45–65, 82–102, 116–136, 153–173, and 178–198; these read HFTG…TPLA, LWCF…ELGV, PYLT…FTST, FVYL…KIIS, and IYAG…LSLF.

The protein belongs to the MsrQ family. Heterodimer of a catalytic subunit (MsrP) and a heme-binding subunit (MsrQ). The cofactor is FMN. Heme b is required as a cofactor.

It localises to the cell inner membrane. In terms of biological role, part of the MsrPQ system that repairs oxidized periplasmic proteins containing methionine sulfoxide residues (Met-O), using respiratory chain electrons. Thus protects these proteins from oxidative-stress damage caused by reactive species of oxygen and chlorine generated by the host defense mechanisms. MsrPQ is essential for the maintenance of envelope integrity under bleach stress, rescuing a wide series of structurally unrelated periplasmic proteins from methionine oxidation, including the primary periplasmic chaperone SurA and the lipoprotein Pal. MsrQ provides electrons for reduction to the reductase catalytic subunit MsrP, using the quinone pool of the respiratory chain. The chain is Protein-methionine-sulfoxide reductase heme-binding subunit MsrQ from Escherichia coli O127:H6 (strain E2348/69 / EPEC).